Consider the following 544-residue polypeptide: Membrane protein insertase YidC (544 aa).

Residues 4-24 (KALLALVLSAAVLLIYQIFIY) traverse the membrane as a helical segment. The tract at residues 44 to 78 (NPAAPVSPQTPADEPSSGSAANPETAAALPVDGTE) is disordered. 3 consecutive transmembrane segments (helical) span residues 363 to 383 (NYGI…WPLG), 434 to 454 (LPMI…LYAI), and 508 to 528 (PVIF…YWLF).

The protein belongs to the OXA1/ALB3/YidC family. Type 1 subfamily. In terms of assembly, interacts with the Sec translocase complex via SecD. Specifically interacts with transmembrane segments of nascent integral membrane proteins during membrane integration.

The protein resides in the cell inner membrane. Its function is as follows. Required for the insertion and/or proper folding and/or complex formation of integral membrane proteins into the membrane. Involved in integration of membrane proteins that insert both dependently and independently of the Sec translocase complex, as well as at least some lipoproteins. Aids folding of multispanning membrane proteins. The polypeptide is Membrane protein insertase YidC (Syntrophus aciditrophicus (strain SB)).